Here is a 1349-residue protein sequence, read N- to C-terminus: Serine-aspartate repeat-containing protein D (1349 aa).

The first 35 residues, Met1–Ile35, serve as a signal peptide directing secretion. The YSIRK-G/S signaling motif signature appears at Phe23–Ser34. The interval Leu36–Glu568 is ligand binding A region. Residues Glu54–Ser185 form a disordered region. Composition is skewed to polar residues over residues Glu62 to Gln71 and Glu94 to Asn108. A compositionally biased stretch (basic and acidic residues) spans Lys130–Asn145. 2 stretches are compositionally biased toward polar residues: residues Thr146–Ala155 and Asn163–Asn173. Over residues Glu174–Thr183 the composition is skewed to basic and acidic residues. CNA-B domains lie at Val569 to Pro680, Lys681 to Pro791, Lys792 to Pro901, Thr902 to Pro1012, and Lys1013 to Thr1123. Disordered stretches follow at residues Phe856–Thr883, Tyr972–Thr992, and Ala1081–Ala1325. 2 stretches are compositionally biased toward polar residues: residues Ser860–Ser869 and Tyr972–Asn981. Acidic residues-rich tracts occupy residues Thr1091–Glu1101 and Tyr1118–Ser1288. Positions Leu1312–Gly1316 match the LPXTG sorting signal motif. Thr1315 is modified (pentaglycyl murein peptidoglycan amidated threonine). Residues Gly1316–Lys1349 constitute a propeptide, removed by sortase.

Belongs to the serine-aspartate repeat-containing protein (SDr) family. In terms of assembly, interacts with host DSG1; this interaction increases S.aureus adherence to keratinocytes.

The protein resides in the secreted. It is found in the cell wall. Its function is as follows. Cell surface-associated calcium-binding protein which plays an important role in adhesion and pathogenesis. Mediates interactions with components of the extracellular matrix such as host DSG1 to promote bacterial adhesion to host cells. Contributes to the resistance to killing by innate immune components such as neutrophils present in blood and thus attenuates bacterial clearance. This is Serine-aspartate repeat-containing protein D (sdrD) from Staphylococcus aureus (strain NCTC 8325 / PS 47).